Consider the following 244-residue polypeptide: Claudin-12 (244 aa).

Topologically, residues 1-10 are cytoplasmic; it reads MGCRDVHAAT. A helical membrane pass occupies residues 11-31; the sequence is VLSFLCGIASVAGLFAGTLLP. At 32–87 the chain is on the extracellular side; sequence NWRKLRLITFNRNEKNLTVYTGLWVKCARYDGGNDCLMYDAAWYSSVDQLDLRVLQ. A helical membrane pass occupies residues 88–108; that stretch reads FALPLSILIAMGALLLCLIGM. The Cytoplasmic segment spans residues 109-135; the sequence is CNTAFRSSVPNIKLAKCLVNSAGCHLV. A helical transmembrane segment spans residues 136-156; that stretch reads AGLLFFLAGTVSLSPSIWVIF. Residues 157–174 are Extracellular-facing; it reads YNIHLNRKFEPVFAFDYA. The chain crosses the membrane as a helical span at residues 175 to 195; the sequence is VYVTVASAGGLFMTALLLFIW. Residues 196–244 are Cytoplasmic-facing; the sequence is YCACKSLPSPFWQPLYSHPPGMHTYSQPYSARSRLSAIEIDIPVVSHTT. A phosphoserine mark is found at S228 and S231.

It belongs to the claudin family. As to quaternary structure, interacts with OCLN.

Its subcellular location is the cell junction. The protein resides in the tight junction. It localises to the cell membrane. Functionally, plays a major role in tight junction-specific obliteration of the intercellular space, through calcium-independent cell-adhesion activity. The protein is Claudin-12 (CLDN12) of Bos taurus (Bovine).